Reading from the N-terminus, the 282-residue chain is Pantothenate synthetase (282 aa).

Met30 to His37 contacts ATP. His37 functions as the Proton donor in the catalytic mechanism. Gln61 is a binding site for (R)-pantoate. Residue Gln61 coordinates beta-alanine. Gly147 to Asp150 is a binding site for ATP. Gln153 is a binding site for (R)-pantoate. ATP is bound by residues Val176 and Lys184 to Arg187.

This sequence belongs to the pantothenate synthetase family. As to quaternary structure, homodimer.

It is found in the cytoplasm. It catalyses the reaction (R)-pantoate + beta-alanine + ATP = (R)-pantothenate + AMP + diphosphate + H(+). The protein operates within cofactor biosynthesis; (R)-pantothenate biosynthesis; (R)-pantothenate from (R)-pantoate and beta-alanine: step 1/1. In terms of biological role, catalyzes the condensation of pantoate with beta-alanine in an ATP-dependent reaction via a pantoyl-adenylate intermediate. In Bacillus anthracis (strain A0248), this protein is Pantothenate synthetase.